A 223-amino-acid chain; its full sequence is Rho-related protein racE (223 aa).

18 to 25 (GDGAVGKT) is a GTP binding site. The short motif at 40–48 (YVPTVFENY) is the Effector region element. Residues 65-69 (DTAGQ) and 123-126 (TKID) contribute to the GTP site. Residues 187 to 223 (GMDKKSQDGSSSASGVPSGDKPTKGKAGKKKSGCIIL) are disordered. The segment covering 210-223 (KGKAGKKKSGCIIL) has biased composition (basic residues). The residue at position 220 (cysteine 220) is a Cysteine methyl ester. Cysteine 220 carries the S-geranylgeranyl cysteine lipid modification. Residues 221 to 223 (IIL) constitute a propeptide, removed in mature form.

The protein belongs to the small GTPase superfamily. Rho family. In terms of assembly, interacts with rgaA.

It is found in the cell membrane. Specifically required for cytokinesis. This Dictyostelium discoideum (Social amoeba) protein is Rho-related protein racE (racE).